The primary structure comprises 504 residues: 26S proteasome non-ATPase regulatory subunit 5 (504 aa).

Ala2 is modified (N-acetylalanine).

Belongs to the proteasome subunit S5B/HSM3 family. Interacts with PSMC1, PSMC2, PSMD1 and PSMD6. Part of transient complex containing PSMD5, PSMC2, PSMC1 and PSMD2 formed during the assembly of the 26S proteasome.

In terms of biological role, acts as a chaperone during the assembly of the 26S proteasome, specifically of the base subcomplex of the PA700/19S regulatory complex (RC). In the initial step of the base subcomplex assembly is part of an intermediate PSMD5:PSMC2:PSMC1:PSMD2 module which probably assembles with a PSMD10:PSMC4:PSMC5:PAAF1 module followed by dissociation of PSMD5. The sequence is that of 26S proteasome non-ATPase regulatory subunit 5 (Psmd5) from Mus musculus (Mouse).